A 210-amino-acid chain; its full sequence is Urease accessory protein UreF (210 aa).

This sequence belongs to the UreF family. As to quaternary structure, ureD, UreF and UreG form a complex that acts as a GTP-hydrolysis-dependent molecular chaperone, activating the urease apoprotein by helping to assemble the nickel containing metallocenter of UreC. The UreE protein probably delivers the nickel.

It is found in the cytoplasm. Its function is as follows. Required for maturation of urease via the functional incorporation of the urease nickel metallocenter. This Cereibacter sphaeroides (strain ATCC 17029 / ATH 2.4.9) (Rhodobacter sphaeroides) protein is Urease accessory protein UreF.